A 495-amino-acid polypeptide reads, in one-letter code: 3-octaprenyl-4-hydroxybenzoate carboxy-lyase (495 aa).

Residue Asn172 coordinates Mn(2+). Prenylated FMN is bound by residues 175–177 (IYR), 189–191 (RWL), and 194–195 (RG). Residue Glu238 coordinates Mn(2+). Asp287 (proton donor) is an active-site residue.

It belongs to the UbiD family. As to quaternary structure, homohexamer. It depends on prenylated FMN as a cofactor. The cofactor is Mn(2+).

It localises to the cell membrane. It catalyses the reaction a 4-hydroxy-3-(all-trans-polyprenyl)benzoate + H(+) = a 2-(all-trans-polyprenyl)phenol + CO2. It functions in the pathway cofactor biosynthesis; ubiquinone biosynthesis. Its function is as follows. Catalyzes the decarboxylation of 3-octaprenyl-4-hydroxy benzoate to 2-octaprenylphenol, an intermediate step in ubiquinone biosynthesis. This is 3-octaprenyl-4-hydroxybenzoate carboxy-lyase from Yersinia enterocolitica serotype O:8 / biotype 1B (strain NCTC 13174 / 8081).